The following is a 388-amino-acid chain: Phosphoglycerate kinase (388 aa).

Substrate contacts are provided by residues 24–26 (DLN), arginine 37, 56–59 (RGGR), arginine 117, and arginine 165. The disordered stretch occupies residues 26 to 136 (NVPLDSDGEQ…RRPRNVQGRR (111 aa)). Residues 34–55 (EQGRITDPGPDHRVGADVERTG) are compositionally biased toward basic and acidic residues. Residues 102–136 (GGHRRPGPRRGVDRRRRPAAGKHPVRRPRNVQGRR) are compositionally biased toward basic residues. ATP is bound by residues lysine 215, glycine 303, glutamate 334, and 363–366 (GGDS).

It belongs to the phosphoglycerate kinase family. As to quaternary structure, monomer.

Its subcellular location is the cytoplasm. It catalyses the reaction (2R)-3-phosphoglycerate + ATP = (2R)-3-phospho-glyceroyl phosphate + ADP. Its pathway is carbohydrate degradation; glycolysis; pyruvate from D-glyceraldehyde 3-phosphate: step 2/5. This Mycobacterium avium protein is Phosphoglycerate kinase (pgk).